The chain runs to 102 residues: NADH-quinone oxidoreductase subunit K (102 aa).

3 consecutive transmembrane segments (helical) span residues 6-26, 30-50, and 62-82; these read MEHG…GLMV, ILFV…AFVV, and IMFI…LAIL.

It belongs to the complex I subunit 4L family. NDH-1 is composed of 13 different subunits. Subunits NuoA, H, J, K, L, M, N constitute the membrane sector of the complex.

The protein resides in the cell inner membrane. The enzyme catalyses a quinone + NADH + 5 H(+)(in) = a quinol + NAD(+) + 4 H(+)(out). Its function is as follows. NDH-1 shuttles electrons from NADH, via FMN and iron-sulfur (Fe-S) centers, to quinones in the respiratory chain. The immediate electron acceptor for the enzyme in this species is believed to be ubiquinone. Couples the redox reaction to proton translocation (for every two electrons transferred, four hydrogen ions are translocated across the cytoplasmic membrane), and thus conserves the redox energy in a proton gradient. The chain is NADH-quinone oxidoreductase subunit K from Azotobacter vinelandii (strain DJ / ATCC BAA-1303).